Reading from the N-terminus, the 650-residue chain is Chaperone protein DnaK (650 aa).

Threonine 200 is subject to Phosphothreonine; by autocatalysis. Residues 613-634 (QAGAAGAAGAAEGAAHAGGAQQ) form a disordered region.

Belongs to the heat shock protein 70 family.

Acts as a chaperone. This Burkholderia vietnamiensis (strain G4 / LMG 22486) (Burkholderia cepacia (strain R1808)) protein is Chaperone protein DnaK.